A 490-amino-acid polypeptide reads, in one-letter code: Trigger factor (490 aa).

The 87-residue stretch at 161–247 (GDQVIVDIEA…VHEVKEAELP (87 aa)) folds into the PPIase FKBP-type domain. Over residues 441-460 (AEPAEGTEPAAEEAVTAPEV) the composition is skewed to low complexity. Residues 441-490 (AEPAEGTEPAAEEAVTAPEVVDGETTPASESAESLAVTETGSRADDDQAS) are disordered. Residues 466 to 481 (TPASESAESLAVTETG) show a composition bias toward polar residues.

Belongs to the FKBP-type PPIase family. Tig subfamily.

It is found in the cytoplasm. The enzyme catalyses [protein]-peptidylproline (omega=180) = [protein]-peptidylproline (omega=0). In terms of biological role, involved in protein export. Acts as a chaperone by maintaining the newly synthesized protein in an open conformation. Functions as a peptidyl-prolyl cis-trans isomerase. The sequence is that of Trigger factor from Thermomicrobium roseum (strain ATCC 27502 / DSM 5159 / P-2).